A 397-amino-acid polypeptide reads, in one-letter code: Aurora kinase A (397 aa).

Residues 1-118 are disordered; sequence MDRCKENCVS…SIQKTEDSKK (118 aa). Composition is skewed to polar residues over residues 29 to 55 and 84 to 102; these read QIPS…SQRV and RLSN…SGNN. Serine 40 and serine 50 each carry phosphoserine. Positions 103 to 118 are enriched in basic and acidic residues; the sequence is SEKEQTSIQKTEDSKK. A Protein kinase domain is found at 126–376; the sequence is FDIGRPLGKG…LAEVLEHPWI (251 aa). ATP is bound by residues lysine 136, lysine 155, and 203–206; that span reads LEYA. Catalysis depends on aspartate 249, which acts as the Proton acceptor. Lysine 251 participates in a covalent cross-link: Glycyl lysine isopeptide (Lys-Gly) (interchain with G-Cter in SUMO2). ATP-binding positions include 253-254 and aspartate 267; that span reads EN. The tract at residues 273 to 286 is activation segment; the sequence is HAPSSRRTTLCGTL. Phosphothreonine occurs at positions 280 and 281. At serine 335 the chain carries Phosphoserine; by PKA and PAK. Over residues 378–387 the composition is skewed to polar residues; it reads ANSSKPPTGH. The tract at residues 378 to 397 is disordered; that stretch reads ANSSKPPTGHNSKEATSKSS. Residues 388–397 are compositionally biased toward basic and acidic residues; it reads NSKEATSKSS.

This sequence belongs to the protein kinase superfamily. Ser/Thr protein kinase family. Aurora subfamily. In terms of assembly, part of a complex composed of NEDD9, AURKA and CTTN; within the complex NEDD9 acts as a scaffold protein and is required for complex formation. Identified in a complex with AUNIP and NIN. Interacts with CPEB1, JTB, TACC1, TPX2, PPP2CA, as well as with the protein phosphatase type 1 (PP1) isoforms PPP1CA, PPP1CB and PPP1CC. Also interacts with its substrates ARHGEF2, BORA, KIF2A, PARD3, and p53/TP53. Interaction with BORA promotes phosphorylation of PLK1. Interacts with FBXL7 and CIMAP3. Interacts with GADD45A, competing with its oligomerization. Interacts (via C-terminus) with AUNIP (via C-terminus). Interacts with SIRT2. Interacts with FRY; this interaction facilitates AURKA-mediated PLK1 phosphorylation. Interacts with MYCN; interaction is phospho-independent and triggers AURKA activation; AURKA competes with FBXW7 for binding to unphosphorylated MYCN but not for binding to phosphorylated MYCN. Interacts with HNRNPU. Interacts with AAAS. Interacts with KLHL18 and CUL3. Interacts with FOXP1. Interacts with HDAC6; AURKA-mediated phosphorylation of HDAC6 promotes deacetylation of alpha-tubulin. Activated by phosphorylation at Thr-281; this brings about a change in the conformation of the activation segment. Phosphorylation at Thr-281 varies during the cell cycle and is highest during M phase. Autophosphorylated at Thr-281 upon TPX2 binding. Thr-281 can be phosphorylated by several kinases, including PAK and PKA. Protein phosphatase type 1 (PP1) binds AURKA and inhibits its activity by dephosphorylating Thr-281 during mitosis. Phosphorylation at Ser-335 decreases the kinase activity. PPP2CA controls degradation by dephosphorylating Ser-52 at the end of mitosis. Phosphorylated in embryonic brain neurons. In terms of processing, ubiquitinated by CHFR, leading to its degradation by the proteasome. Ubiquitinated by the anaphase-promoting complex (APC), leading to its degradation by the proteasome. Ubiquitinated by the E3 ubiquitin-protein ligase complex SCF(FBXL7) during mitosis, leading to its degradation by the proteasome. Ubiquitinated by the CUL3-KLHL18 ligase leading to its activation at the centrosome which is required for initiating mitotic entry. Ubiquitination mediated by CUL3-KLHL18 ligase does not lead to its degradation by the proteasome. Detected in neurons in brain cortex and hippocampus (at protein level). Expressed in mammary gland and tumor.

It localises to the cytoplasm. Its subcellular location is the cytoskeleton. The protein localises to the microtubule organizing center. The protein resides in the centrosome. It is found in the spindle pole. It localises to the centriole. Its subcellular location is the cell projection. The protein localises to the neuron projection. The protein resides in the cilium. It is found in the cilium basal body. It localises to the basolateral cell membrane. The enzyme catalyses L-seryl-[protein] + ATP = O-phospho-L-seryl-[protein] + ADP + H(+). It carries out the reaction L-threonyl-[protein] + ATP = O-phospho-L-threonyl-[protein] + ADP + H(+). With respect to regulation, activation of CDK1, appears to be an upstream event of AURKA activation. Phosphatase inhibitor-2 (PPP1R2) and TPX2 act also as activators. Inactivated by the G2 checkpoint. Inhibited by GADD45A and p53/TP53, and through dephosphorylation by protein phosphatase type 1 (PP1). MLN8054 is also a potent and selective inhibitor. Activated during the early phase of cilia disassembly in the presence of FBXL7 and CIMAP3. Inhibited by the small molecule inhibitor VX-680. Its function is as follows. Mitotic serine/threonine kinase that contributes to the regulation of cell cycle progression. Associates with the centrosome and the spindle microtubules during mitosis and plays a critical role in various mitotic events including the establishment of mitotic spindle, centrosome duplication, centrosome separation as well as maturation, chromosomal alignment, spindle assembly checkpoint, and cytokinesis. Required for normal spindle positioning during mitosis and for the localization of NUMA1 and DCTN1 to the cell cortex during metaphase. Required for initial activation of CDK1 at centrosomes. Phosphorylates numerous target proteins, including ARHGEF2, BORA, BRCA1, CDC25B, DLGP5, HDAC6, KIF2A, LATS2, NDEL1, PARD3, PPP1R2, PLK1, RASSF1, TACC3, p53/TP53 and TPX2. Phosphorylates MCRS1 which is required for MCRS1-mediated kinetochore fiber assembly and mitotic progression. Regulates KIF2A tubulin depolymerase activity. Required for normal axon formation. Plays a role in microtubule remodeling during neurite extension. Important for microtubule formation and/or stabilization. Also acts as a key regulatory component of the p53/TP53 pathway, and particularly the checkpoint-response pathways critical for oncogenic transformation of cells, by phosphorylating and stabilizating p53/TP53. Phosphorylates its own inhibitors, the protein phosphatase type 1 (PP1) isoforms, to inhibit their activity. Inhibits cilia outgrowth. Required for cilia disassembly via phosphorylation of HDAC6 and subsequent deacetylation of alpha-tubulin. Regulates protein levels of the anti-apoptosis protein BIRC5 by suppressing the expression of the SCF(FBXL7) E3 ubiquitin-protein ligase substrate adapter FBXL7 through the phosphorylation of the transcription factor FOXP1. The sequence is that of Aurora kinase A from Rattus norvegicus (Rat).